The following is a 791-amino-acid chain: Vezatin (791 aa).

2 helical membrane passes run 138–158 (IATP…ALAA) and 163–183 (SISS…FTVL). Residues 435–464 (VRSLQLHLKALLNEVIILEDELEKLSSCKE) are a coiled coil. The span at 752–769 (GDEWDDDDDDNDNDDDNY) shows a compositional bias: acidic residues. The interval 752–791 (GDEWDDDDDDNDNDDDNYDQVKNVESHEKERNNVSLQLEE) is disordered. Basic and acidic residues predominate over residues 773 to 783 (KNVESHEKERN).

It belongs to the vezatin family. Interacts with myosin VIIa and the cadherin-catenins complex.

It is found in the cell membrane. The protein localises to the cell junction. The protein resides in the adherens junction. It localises to the nucleus. In terms of biological role, plays a pivotal role in the establishment of adherens junctions and their maintenance in adult life. This is Vezatin (vezt) from Xenopus tropicalis (Western clawed frog).